A 453-amino-acid chain; its full sequence is Ribosomal protein uS12 methylthiotransferase RimO (453 aa).

Positions 9–124 constitute an MTTase N-terminal domain; that stretch reads PKIGFVSLGC…VMDAVHKHMP (116 aa). Cysteine 18, cysteine 54, cysteine 83, cysteine 155, cysteine 159, and cysteine 162 together coordinate [4Fe-4S] cluster. The Radical SAM core domain occupies 141–382; the sequence is LTPKHFAYLK…MLLQEEISKK (242 aa). The TRAM domain maps to 385-453; it reads QAKVGKTMRV…ADAHDLWAEA (69 aa).

Belongs to the methylthiotransferase family. RimO subfamily. [4Fe-4S] cluster serves as cofactor.

The protein resides in the cytoplasm. The enzyme catalyses L-aspartate(89)-[ribosomal protein uS12]-hydrogen + (sulfur carrier)-SH + AH2 + 2 S-adenosyl-L-methionine = 3-methylsulfanyl-L-aspartate(89)-[ribosomal protein uS12]-hydrogen + (sulfur carrier)-H + 5'-deoxyadenosine + L-methionine + A + S-adenosyl-L-homocysteine + 2 H(+). Its function is as follows. Catalyzes the methylthiolation of an aspartic acid residue of ribosomal protein uS12. The polypeptide is Ribosomal protein uS12 methylthiotransferase RimO (Janthinobacterium sp. (strain Marseille) (Minibacterium massiliensis)).